A 481-amino-acid chain; its full sequence is Serralysin B (481 aa).

The propeptide occupies 1 to 15 (MQQNEKASLNTSAAA). His-189 is a binding site for Zn(2+). Glu-190 is a catalytic residue. The Zn(2+) site is built by His-193 and Tyr-230. Positions 267, 269, 271, 299, 301, 302, 304, 341, 343, 348, 350, 352, 357, 359, 361, 365, 366, 367, 368, 370, 374, 377, 379, 383, 384, 385, 386, 388, 397, 404, and 414 each coordinate Ca(2+). Hemolysin-type calcium-binding repeat units follow at residues 346-363 (IGGS…DNIL), 364-381 (QGGA…ADTL), and 382-399 (TGGA…QDST).

The protein belongs to the peptidase M10B family. It depends on Ca(2+) as a cofactor. Zn(2+) is required as a cofactor.

The protein localises to the secreted. It catalyses the reaction Preferential cleavage of bonds with hydrophobic residues in P1'.. The sequence is that of Serralysin B (prtB) from Dickeya chrysanthemi (Pectobacterium chrysanthemi).